We begin with the raw amino-acid sequence, 311 residues long: HPr kinase/phosphorylase (311 aa).

Active-site residues include histidine 138 and lysine 159. 153–160 (GDSGIGKS) contributes to the ATP binding site. Mg(2+) is bound at residue serine 160. The Proton acceptor; for phosphorylation activity. Proton donor; for dephosphorylation activity role is filled by aspartate 177. Positions 201–210 (LEIRGVGIID) are important for the catalytic mechanism of both phosphorylation and dephosphorylation. Glutamate 202 is a Mg(2+) binding site. Arginine 243 is an active-site residue. The interval 264-269 (PVKTGR) is important for the catalytic mechanism of dephosphorylation.

It belongs to the HPrK/P family. Homohexamer. It depends on Mg(2+) as a cofactor.

It carries out the reaction [HPr protein]-L-serine + ATP = [HPr protein]-O-phospho-L-serine + ADP + H(+). The enzyme catalyses [HPr protein]-O-phospho-L-serine + phosphate + H(+) = [HPr protein]-L-serine + diphosphate. Its function is as follows. Catalyzes the ATP- as well as the pyrophosphate-dependent phosphorylation of a specific serine residue in HPr, a phosphocarrier protein of the phosphoenolpyruvate-dependent sugar phosphotransferase system (PTS). HprK/P also catalyzes the pyrophosphate-producing, inorganic phosphate-dependent dephosphorylation (phosphorolysis) of seryl-phosphorylated HPr (P-Ser-HPr). The two antagonistic activities of HprK/P are regulated by several intracellular metabolites, which change their concentration in response to the absence or presence of rapidly metabolisable carbon sources (glucose, fructose, etc.) in the growth medium. Therefore, by controlling the phosphorylation state of HPr, HPrK/P is a sensor enzyme that plays a major role in the regulation of carbon metabolism and sugar transport: it mediates carbon catabolite repression (CCR), and regulates PTS-catalyzed carbohydrate uptake and inducer exclusion. The polypeptide is HPr kinase/phosphorylase (Streptococcus gordonii (strain Challis / ATCC 35105 / BCRC 15272 / CH1 / DL1 / V288)).